We begin with the raw amino-acid sequence, 343 residues long: Small ribosomal subunit biogenesis GTPase RsgA (343 aa).

The region spanning 116-275 is the CP-type G domain; it reads RGQLKPVAAN…LIDSPGIREF (160 aa). Residues 163-166 and 217-225 each bind GTP; these read NKAD and GQSGVGKSS. Zn(2+) is bound by residues C299, C304, H306, and C312.

The protein belongs to the TRAFAC class YlqF/YawG GTPase family. RsgA subfamily. Monomer. Associates with 30S ribosomal subunit, binds 16S rRNA. Zn(2+) serves as cofactor.

The protein localises to the cytoplasm. Functionally, one of several proteins that assist in the late maturation steps of the functional core of the 30S ribosomal subunit. Helps release RbfA from mature subunits. May play a role in the assembly of ribosomal proteins into the subunit. Circularly permuted GTPase that catalyzes slow GTP hydrolysis, GTPase activity is stimulated by the 30S ribosomal subunit. This is Small ribosomal subunit biogenesis GTPase RsgA from Pseudomonas fluorescens (strain ATCC BAA-477 / NRRL B-23932 / Pf-5).